A 119-amino-acid chain; its full sequence is uncharacterized protein (119 aa).

This is an uncharacterized protein from Escherichia coli (strain K12).